A 458-amino-acid polypeptide reads, in one-letter code: GTPase Der (458 aa).

2 EngA-type G domains span residues 9–171 and 197–368; these read KTIA…DLNQ and IQVG…ECFS. GTP-binding positions include 15 to 22, 62 to 66, 123 to 126, 203 to 210, 250 to 254, and 314 to 317; these read GQPNVGKS, DTGGM, NKID, GRVNVGKS, DTAGI, and NKWD. Residues 369–453 form the KH-like domain; it reads KRIPTSLLNS…PLILNAKDKK (85 aa).

This sequence belongs to the TRAFAC class TrmE-Era-EngA-EngB-Septin-like GTPase superfamily. EngA (Der) GTPase family. In terms of assembly, associates with the 50S ribosomal subunit.

In terms of biological role, GTPase that plays an essential role in the late steps of ribosome biogenesis. The chain is GTPase Der from Helicobacter pylori (strain ATCC 700392 / 26695) (Campylobacter pylori).